We begin with the raw amino-acid sequence, 522 residues long: Peptide chain release factor 3 (522 aa).

Residues 9–276 form the tr-type G domain; it reads KKRRTFAIIS…SFVNLAPAPQ (268 aa). Residues 18 to 25, 86 to 90, and 140 to 143 each bind GTP; these read SHPDAGKT, DTPGH, and NKLD.

Belongs to the TRAFAC class translation factor GTPase superfamily. Classic translation factor GTPase family. PrfC subfamily.

The protein localises to the cytoplasm. In terms of biological role, increases the formation of ribosomal termination complexes and stimulates activities of RF-1 and RF-2. It binds guanine nucleotides and has strong preference for UGA stop codons. It may interact directly with the ribosome. The stimulation of RF-1 and RF-2 is significantly reduced by GTP and GDP, but not by GMP. The chain is Peptide chain release factor 3 from Lactobacillus gasseri (strain ATCC 33323 / DSM 20243 / BCRC 14619 / CIP 102991 / JCM 1131 / KCTC 3163 / NCIMB 11718 / NCTC 13722 / AM63).